The sequence spans 84 residues: Cell division topological specificity factor (84 aa).

It belongs to the MinE family.

Functionally, prevents the cell division inhibition by proteins MinC and MinD at internal division sites while permitting inhibition at polar sites. This ensures cell division at the proper site by restricting the formation of a division septum at the midpoint of the long axis of the cell. The polypeptide is Cell division topological specificity factor (Pseudomonas aeruginosa (strain LESB58)).